The primary structure comprises 127 residues: Thioredoxin domain-containing protein 8 (127 aa).

Positions 1-92 (MVQIIKDTNE…SQKVTLFSRI (92 aa)) constitute a Thioredoxin domain. Cys-32 and Cys-35 are joined by a disulfide.

Belongs to the thioredoxin family. As to expression, testis-specific. Only expressed during spermiogenesis, prominently in the Golgi apparatus of pachytene spermatocytes and round and elongated spermatids, with a transient localization in the developing acrosome of round spermatids (at protein level).

Its subcellular location is the cytoplasm. The protein localises to the golgi apparatus. Its function is as follows. May be required for post-translational modifications of proteins required for acrosomal biogenesis. May act by reducing disulfide bonds within the sperm. The sequence is that of Thioredoxin domain-containing protein 8 (TXNDC8) from Homo sapiens (Human).